Here is a 196-residue protein sequence, read N- to C-terminus: T-cell surface glycoprotein CD3 epsilon chain (196 aa).

Residues 1–21 form the signal peptide; it reads MPSGNLWKVLGLCLLSVGAWG. Residues 22–116 are Extracellular-facing; sequence QEDIERPDED…VCENCVEVDL (95 aa). The Ig-like domain occupies 28 to 102; that stretch reads PDEDTQKTFK…VGEKTSHRLY (75 aa). Cysteine 49 and cysteine 91 form a disulfide bridge. Residues 117–137 traverse the membrane as a helical segment; that stretch reads MAVVTIIVVDICITLGLLMVV. The Cytoplasmic segment spans residues 138–196; sequence YYYSKSRKAKAMPVTRGAGAGGRPRGQNRERPPPVPNPDYEPIRKGQRDLYSGLNQRGR. Residues 150–196 form a disordered region; the sequence is PVTRGAGAGGRPRGQNRERPPPVPNPDYEPIRKGQRDLYSGLNQRGR. Positions 164–181 are NUMB-binding region; that stretch reads QNRERPPPVPNPDYEPIR. Residues 167-194 form the ITAM domain; the sequence is ERPPPVPNPDYEPIRKGQRDLYSGLNQR. The tract at residues 168–175 is proline-rich sequence; it reads RPPPVPNP. Phosphotyrosine occurs at positions 177 and 188.

In terms of assembly, the TCR-CD3 complex is composed of a CD3D/CD3E and a CD3G/CD3E heterodimers that preferentially associate with TCRalpha and TCRbeta, respectively, to form TCRalpha/CD3E/CD3G and TCRbeta/CD3G/CD3E trimers. In turn, the hexamer interacts with CD3Z homodimer to form the TCR-CD3 complex. Alternatively, TCRalpha and TCRbeta can be replaced by TCRgamma and TCRdelta. Interacts with CD6. Interacts (via Proline-rich sequence) with NCK1; the interaction is ligand dependent but independent of tyrosine kinase activation. In terms of processing, phosphorylated on Tyr residues after T-cell receptor triggering by LCK in association with CD4/CD8.

Its subcellular location is the cell membrane. Part of the TCR-CD3 complex present on T-lymphocyte cell surface that plays an essential role in adaptive immune response. When antigen presenting cells (APCs) activate T-cell receptor (TCR), TCR-mediated signals are transmitted across the cell membrane by the CD3 chains CD3D, CD3E, CD3G and CD3Z. All CD3 chains contain immunoreceptor tyrosine-based activation motifs (ITAMs) in their cytoplasmic domain. Upon TCR engagement, these motifs become phosphorylated by Src family protein tyrosine kinases LCK and FYN, resulting in the activation of downstream signaling pathways. In addition of this role of signal transduction in T-cell activation, CD3E plays an essential role in correct T-cell development. Also participates in internalization and cell surface down-regulation of TCR-CD3 complexes via endocytosis sequences present in CD3E cytosolic region. In addition to its role as a TCR coreceptor, it serves as a receptor for ITPRIPL1. Ligand recognition inhibits T-cell activation by promoting interaction with NCK1, which prevents CD3E-ZAP70 interaction and blocks the ERK-NFkB signaling cascade and calcium influx. In Sus scrofa (Pig), this protein is T-cell surface glycoprotein CD3 epsilon chain (CD3E).